The following is a 588-amino-acid chain: Probable catabolite repression protein creC (588 aa).

WD repeat units lie at residues 249–289 (VCNS…ALFT), 323–364 (LANQ…DIFR), 365–404 (SYYG…IVAR), and 407–451 (GHNS…LHRP). The disordered stretch occupies residues 452–499 (RAHQASTRQRTSMITSNSQHASRHRADSAGNRARSDSQRTADGYDEYD). The segment covering 455 to 471 (QASTRQRTSMITSNSQH) has biased composition (polar residues). One copy of the WD 5 repeat lies at 523-560 (IGSDPICWLGFQEDSIMTSSLEGHIRTWDRPREGINDT). The tract at residues 569–588 (AISAGAGSGSAVANSARGSL) is disordered.

It belongs to the WD repeat creC family. Interacts with creB.

Component of the regulatory network controlling carbon source utilization through ubiquitination and deubiquitination involving creA, creB, creC, creD and acrB. Required to prevent the proteolysis of the CreB deubiquitinating enzyme in the absence of carbon catabolite repression. CreB deubiquitinating enzyme stabilized in a complex with the CreC leads to the expression of genes such as those in the proline and quinate pathways. The polypeptide is Probable catabolite repression protein creC (creC) (Aspergillus terreus (strain NIH 2624 / FGSC A1156)).